Consider the following 367-residue polypeptide: Protein TlpB (367 aa).

Transmembrane regions (helical) follow at residues 15–35 (ILIS…SPYF), 53–73 (IIAP…GILI), 83–103 (IIPI…YVTF), 124–144 (IQAI…FFLL), and 153–173 (FYVV…LAPI).

Its subcellular location is the membrane. The chain is Protein TlpB (tlpB) from Flavobacterium psychrophilum.